Here is a 605-residue protein sequence, read N- to C-terminus: DNA primase (605 aa).

Residues 38–62 form a CHC2-type zinc finger; that stretch reads CPFHDEKTPSFTVSEDKQICHCFGC. One can recognise a Toprim domain in the interval 260–341; the sequence is DEIVLLEGFM…NVFVIQLPSG (82 aa). Mg(2+) is bound by residues Glu-266, Asp-310, and Asp-312.

It belongs to the DnaG primase family. In terms of assembly, monomer. Interacts with DnaB. It depends on Zn(2+) as a cofactor. Requires Mg(2+) as cofactor.

It catalyses the reaction ssDNA + n NTP = ssDNA/pppN(pN)n-1 hybrid + (n-1) diphosphate.. Its function is as follows. RNA polymerase that catalyzes the synthesis of short RNA molecules used as primers for DNA polymerase during DNA replication. The polypeptide is DNA primase (Staphylococcus aureus (strain Mu50 / ATCC 700699)).